Here is a 273-residue protein sequence, read N- to C-terminus: Undecaprenyl-diphosphatase (273 aa).

A run of 7 helical transmembrane segments spans residues 13–35 (GLVE…VFGN), 45–62 (VFEI…VFEY), 82–102 (FVLN…LFDK), 108–128 (LFNP…ILWV), 186–206 (TEFS…YDVL), 219–239 (LILI…KALL), and 250–270 (FAYY…SGWI).

The protein belongs to the UppP family.

Its subcellular location is the cell inner membrane. The catalysed reaction is di-trans,octa-cis-undecaprenyl diphosphate + H2O = di-trans,octa-cis-undecaprenyl phosphate + phosphate + H(+). In terms of biological role, catalyzes the dephosphorylation of undecaprenyl diphosphate (UPP). Confers resistance to bacitracin. The polypeptide is Undecaprenyl-diphosphatase (Neisseria gonorrhoeae (strain NCCP11945)).